The following is a 937-amino-acid chain: Molybdenum cofactor sulfurase (937 aa).

Lysine 237 is subject to N6-(pyridoxal phosphate)lysine. The active site involves cysteine 397. 3 disordered regions span residues 633 to 710 (GQGK…RRIL), 756 to 795 (PSPSTPSASPSNPLTPSPSPSTTSKPTPKPKQKPKQKLNP), and 897 to 921 (KEGTGMGMGTGTGTGTGTRSMGGNG). The segment covering 638–652 (MTRHAKAHLQRHQHQ) has biased composition (basic residues). In terms of domain architecture, MOSC spans 682–935 (TPPSPPDSDT…VRVGDVVRPS (254 aa)). Residues 756 to 767 (PSPSTPSASPSN) show a composition bias toward low complexity. Over residues 900–921 (TGMGMGTGTGTGTGTRSMGGNG) the composition is skewed to gly residues.

It belongs to the class-V pyridoxal-phosphate-dependent aminotransferase family. MOCOS subfamily. The cofactor is pyridoxal 5'-phosphate.

It catalyses the reaction Mo-molybdopterin + L-cysteine + AH2 = thio-Mo-molybdopterin + L-alanine + A + H2O. It functions in the pathway cofactor biosynthesis; molybdopterin biosynthesis. Functionally, sulfurates the molybdenum cofactor. Sulfation of molybdenum is essential for xanthine dehydrogenase (XDH) and aldehyde oxidase (ADO) enzymes in which molybdenum cofactor is liganded by 1 oxygen and 1 sulfur atom in active form. The protein is Molybdenum cofactor sulfurase (nit-13) of Neurospora crassa (strain ATCC 24698 / 74-OR23-1A / CBS 708.71 / DSM 1257 / FGSC 987).